The primary structure comprises 59 residues: Large ribosomal subunit protein bL32 (59 aa).

The protein belongs to the bacterial ribosomal protein bL32 family.

This chain is Large ribosomal subunit protein bL32, found in Synechococcus sp. (strain JA-2-3B'a(2-13)) (Cyanobacteria bacterium Yellowstone B-Prime).